We begin with the raw amino-acid sequence, 430 residues long: Mucorpepsin (430 aa).

A signal peptide spans 1-22 (MLFSQITSAILLTAASLSLTTA). Positions 23-69 (RPVSKQSESKDKLLALPLTSVSRKFSQTKFGQQQLAEKLAGLKPFSE) are cleaved as a propeptide — activation peptide. Residues 89–421 (YAIPVSIGTP…DFGNNRIGFA (333 aa)) form the Peptidase A1 domain. Residue Asp-107 is part of the active site. Residues Cys-120 and Cys-126 are joined by a disulfide bond. 2 N-linked (GlcNAc...) asparagine glycosylation sites follow: Asn-148 and Asn-257. The active site involves Asp-306. A disulfide bond links Cys-341 and Cys-385.

Belongs to the peptidase A1 family.

It catalyses the reaction Hydrolysis of proteins, favoring hydrophobic residues at P1 and P1'. Clots milk. Does not accept Lys at P1, and hence does not activate trypsinogen.. In terms of biological role, this enzyme, capable of clotting milk is frequently used for cheese production. This Rhizomucor miehei protein is Mucorpepsin.